The primary structure comprises 89 residues: Large ribosomal subunit protein bL28 (89 aa).

Belongs to the bacterial ribosomal protein bL28 family.

In Chlamydia trachomatis serovar A (strain ATCC VR-571B / DSM 19440 / HAR-13), this protein is Large ribosomal subunit protein bL28.